A 173-amino-acid chain; its full sequence is RNA pyrophosphohydrolase (173 aa).

The Nudix hydrolase domain maps to 6-149 (GFRANVGIIL…KRGVYRRALQ (144 aa)). Residues 38-59 (GGIDRGETPMDAMYRELWEEVG) carry the Nudix box motif.

Belongs to the Nudix hydrolase family. RppH subfamily. A divalent metal cation serves as cofactor.

In terms of biological role, accelerates the degradation of transcripts by removing pyrophosphate from the 5'-end of triphosphorylated RNA, leading to a more labile monophosphorylated state that can stimulate subsequent ribonuclease cleavage. In Psychrobacter arcticus (strain DSM 17307 / VKM B-2377 / 273-4), this protein is RNA pyrophosphohydrolase.